A 417-amino-acid polypeptide reads, in one-letter code: Tyrosine aminotransferase (417 aa).

Lys249 carries the N6-(pyridoxal phosphate)lysine modification.

It belongs to the class-I pyridoxal-phosphate-dependent aminotransferase family. In terms of assembly, homodimer. The cofactor is pyridoxal 5'-phosphate.

The enzyme catalyses L-tyrosine + 2-oxoglutarate = 3-(4-hydroxyphenyl)pyruvate + L-glutamate. It participates in amino-acid degradation; L-phenylalanine degradation; acetoacetate and fumarate from L-phenylalanine: step 2/6. In terms of biological role, transaminase involved in tyrosine breakdown. Converts tyrosine to p-hydroxyphenylpyruvate. Has much lower affinity and transaminase activity towards phenylalanine. The sequence is that of Tyrosine aminotransferase (tat) from Dictyostelium discoideum (Social amoeba).